Here is a 216-residue protein sequence, read N- to C-terminus: MSVPQQPLILQRGLEAYETTFAAMRAFTDARTAATADELWIVEHPPVFTLGLAADPSHVLDPHQIPVVETDRGGEVTYHGPGQVVIYLLLDLRRHKADARLFARELVNKIEQSVIDTLAAYNLACERKPGAPGIYMSDGPAQGAKIAALGLKIRGNGCTYHGVSLNVAMDLTPFTWINPCGYEDLATIDMQSLGAQTTLAEVQNALANRLSTSLSR.

Residues 33-216 (AATADELWIV…ANRLSTSLSR (184 aa)) form the BPL/LPL catalytic domain. Residues 72-79 (RGGEVTYH), 148-150 (ALG), and 162-164 (GVS) contribute to the substrate site. The active-site Acyl-thioester intermediate is Cys180.

Belongs to the LipB family.

Its subcellular location is the cytoplasm. The enzyme catalyses octanoyl-[ACP] + L-lysyl-[protein] = N(6)-octanoyl-L-lysyl-[protein] + holo-[ACP] + H(+). It participates in protein modification; protein lipoylation via endogenous pathway; protein N(6)-(lipoyl)lysine from octanoyl-[acyl-carrier-protein]: step 1/2. In terms of biological role, catalyzes the transfer of endogenously produced octanoic acid from octanoyl-acyl-carrier-protein onto the lipoyl domains of lipoate-dependent enzymes. Lipoyl-ACP can also act as a substrate although octanoyl-ACP is likely to be the physiological substrate. This chain is Octanoyltransferase, found in Janthinobacterium sp. (strain Marseille) (Minibacterium massiliensis).